We begin with the raw amino-acid sequence, 464 residues long: Peptidase inhibitor 16 (464 aa).

The N-terminal stretch at 1–27 is a signal peptide; the sequence is MHGSGSLLACLLPPLLLLGAAPGPAGA. Positions 37 to 165 constitute an SCP domain; that stretch reads VELHNLYRTQ…TNIHLLVCNY (129 aa). Residue Asn114 is glycosylated (N-linked (GlcNAc...) asparagine). 4 disordered regions span residues 208 to 241, 260 to 281, 304 to 347, and 386 to 412; these read DLSS…TEPP, VETK…TKTP, PATL…LMGT, and TTLK…ANAV. Residues 311–325 are compositionally biased toward basic and acidic residues; the sequence is STHDPIPKSADKEAS. A compositionally biased stretch (low complexity) spans 395–411; it reads SSKSLSNSPSASATANA.

Belongs to the CRISP family. Interacts with PSP94/MSMB. N-glycosylated.

It is found in the secreted. Its function is as follows. May inhibit cardiomyocyte growth. The protein is Peptidase inhibitor 16 (PI16) of Bos taurus (Bovine).